A 155-amino-acid chain; its full sequence is Cytochrome c-type biogenesis protein CcmE (155 aa).

Over 1-8 (MNPIRKKR) the chain is Cytoplasmic. A helical; Signal-anchor for type II membrane protein membrane pass occupies residues 9–29 (LYWILALLCGVSIAMALALSA). At 30–155 (LQENINLFYT…PKRVKQESTR (126 aa)) the chain is on the periplasmic side. Residues H124 and Y128 each coordinate heme.

Belongs to the CcmE/CycJ family.

The protein resides in the cell inner membrane. In terms of biological role, heme chaperone required for the biogenesis of c-type cytochromes. Transiently binds heme delivered by CcmC and transfers the heme to apo-cytochromes in a process facilitated by CcmF and CcmH. This Janthinobacterium sp. (strain Marseille) (Minibacterium massiliensis) protein is Cytochrome c-type biogenesis protein CcmE.